A 520-amino-acid polypeptide reads, in one-letter code: Keratin, type II cytoskeletal 72 (520 aa).

The segment at 1–133 is head; the sequence is MSRQLTLYPG…DPEIQKVRAQ (133 aa). The interval 134–169 is coil 1A; sequence EREQIKALNNKFASFIDKVRFLEQQNQVLETKWELL. In terms of domain architecture, IF rod spans 134 to 447; it reads EREQIKALNN…KLLESEESRM (314 aa). Residues 170 to 188 form a linker 1 region; that stretch reads QQLDLNNSKRSLEPVHESY. Residues 189 to 280 form a coil 1B region; sequence ISNLQKQLEI…VLFEGEIAQM (92 aa). The linker 12 stretch occupies residues 281–304; that stretch reads QSHISDTSVILSMDNNRQLDLDSI. A coil 2 region spans residues 305–443; it reads LAEVRAQYEE…ATYRKLLESE (139 aa). The tail stretch occupies residues 444–520; the sequence is ESRMAGEYPN…SSGTTKKTSR (77 aa). The tract at residues 494-520 is disordered; the sequence is KGSCGSELKDPPAKTSGSSGTTKKTSR. Low complexity predominate over residues 507–520; the sequence is KTSGSSGTTKKTSR.

The protein belongs to the intermediate filament family. As to quaternary structure, heterotetramer of two type I and two type II keratins.

Functionally, has a role in hair formation. Specific component of keratin intermediate filaments in the inner root sheath (IRS) of the hair follicle. This chain is Keratin, type II cytoskeletal 72 (Krt72), found in Mus musculus (Mouse).